Consider the following 284-residue polypeptide: 2-dehydro-3-deoxyphosphooctonate aldolase (284 aa).

It belongs to the KdsA family.

It localises to the cytoplasm. The enzyme catalyses D-arabinose 5-phosphate + phosphoenolpyruvate + H2O = 3-deoxy-alpha-D-manno-2-octulosonate-8-phosphate + phosphate. Its pathway is carbohydrate biosynthesis; 3-deoxy-D-manno-octulosonate biosynthesis; 3-deoxy-D-manno-octulosonate from D-ribulose 5-phosphate: step 2/3. It functions in the pathway bacterial outer membrane biogenesis; lipopolysaccharide biosynthesis. The protein is 2-dehydro-3-deoxyphosphooctonate aldolase of Burkholderia vietnamiensis (strain G4 / LMG 22486) (Burkholderia cepacia (strain R1808)).